A 1342-amino-acid polypeptide reads, in one-letter code: DNA-directed RNA polymerase subunit beta (1342 aa).

It belongs to the RNA polymerase beta chain family. The RNAP catalytic core consists of 2 alpha, 1 beta, 1 beta' and 1 omega subunit. When a sigma factor is associated with the core the holoenzyme is formed, which can initiate transcription.

It carries out the reaction RNA(n) + a ribonucleoside 5'-triphosphate = RNA(n+1) + diphosphate. Functionally, DNA-dependent RNA polymerase catalyzes the transcription of DNA into RNA using the four ribonucleoside triphosphates as substrates. This Klebsiella pneumoniae (strain 342) protein is DNA-directed RNA polymerase subunit beta.